Reading from the N-terminus, the 481-residue chain is UDP-N-acetylmuramoyl-L-alanyl-D-glutamate--L-lysine ligase (481 aa).

Residue S42 coordinates UDP-N-acetyl-alpha-D-muramoyl-L-alanyl-D-glutamate. 118 to 124 (GTKGKTT) is a binding site for ATP. UDP-N-acetyl-alpha-D-muramoyl-L-alanyl-D-glutamate contacts are provided by residues Q158, 160–161 (TT), S187, and R195. An N6-carboxylysine modification is found at K229. Positions 404–407 (DDPN) match the L-lysine recognition motif motif.

Belongs to the MurCDEF family. MurE subfamily. In terms of processing, carboxylation is probably crucial for Mg(2+) binding and, consequently, for the gamma-phosphate positioning of ATP.

The protein localises to the cytoplasm. The enzyme catalyses UDP-N-acetyl-alpha-D-muramoyl-L-alanyl-D-glutamate + L-lysine + ATP = UDP-N-acetyl-alpha-D-muramoyl-L-alanyl-gamma-D-glutamyl-L-lysine + ADP + phosphate + H(+). Its pathway is cell wall biogenesis; peptidoglycan biosynthesis. Catalyzes the addition of L-lysine to the nucleotide precursor UDP-N-acetylmuramoyl-L-alanyl-D-glutamate (UMAG) in the biosynthesis of bacterial cell-wall peptidoglycan. The chain is UDP-N-acetylmuramoyl-L-alanyl-D-glutamate--L-lysine ligase from Streptococcus pyogenes serotype M6 (strain ATCC BAA-946 / MGAS10394).